Here is a 424-residue protein sequence, read N- to C-terminus: Elongation factor 1-alpha (424 aa).

The region spanning K5 to V223 is the tr-type G domain. The interval G14–S21 is G1. Position 14-21 (G14–S21) interacts with GTP. S21 is a Mg(2+) binding site. Residues G70 to D74 form a G2 region. A G3 region spans residues D91 to G94. GTP is bound by residues D91–H95 and N146–D149. The tract at residues N146–D149 is G4. The segment at S187 to Y189 is G5.

It belongs to the TRAFAC class translation factor GTPase superfamily. Classic translation factor GTPase family. EF-Tu/EF-1A subfamily.

It localises to the cytoplasm. The catalysed reaction is GTP + H2O = GDP + phosphate + H(+). Functionally, GTP hydrolase that promotes the GTP-dependent binding of aminoacyl-tRNA to the A-site of ribosomes during protein biosynthesis. The protein is Elongation factor 1-alpha of Methanothrix thermoacetophila (strain DSM 6194 / JCM 14653 / NBRC 101360 / PT) (Methanosaeta thermophila).